The following is a 429-amino-acid chain: Ribosomal RNA small subunit methyltransferase B (429 aa).

Residues Cys254 to Lys260, Asp277, Asp303, and Asp322 each bind S-adenosyl-L-methionine. Cys375 (nucleophile) is an active-site residue.

Belongs to the class I-like SAM-binding methyltransferase superfamily. RsmB/NOP family.

The protein localises to the cytoplasm. It carries out the reaction cytidine(967) in 16S rRNA + S-adenosyl-L-methionine = 5-methylcytidine(967) in 16S rRNA + S-adenosyl-L-homocysteine + H(+). Its function is as follows. Specifically methylates the cytosine at position 967 (m5C967) of 16S rRNA. This Pectobacterium carotovorum subsp. carotovorum (strain PC1) protein is Ribosomal RNA small subunit methyltransferase B.